The chain runs to 131 residues: Ribonuclease VapC42 (131 aa).

The PINc domain occupies 1–125 (MIVDTSAIVA…FRGDDFTHTD (125 aa)). Mg(2+)-binding residues include D4 and D100.

It belongs to the PINc/VapC protein family. Requires Mg(2+) as cofactor.

Toxic component of a type II toxin-antitoxin (TA) system. An RNase. Its cognate antitoxin is VapB42. The protein is Ribonuclease VapC42 of Mycobacterium tuberculosis (strain CDC 1551 / Oshkosh).